Here is a 204-residue protein sequence, read N- to C-terminus: Holliday junction branch migration complex subunit RuvA (204 aa).

A domain I region spans residues 1-63; it reads MIGWLQGRVL…EDGQFLYGFS (63 aa). Positions 64-142 are domain II; the sequence is SFLQRQLFRE…KNDLFLCDES (79 aa). Positions 143–152 are flexible linker; sequence ESSRAPIALS. The interval 152-204 is domain III; the sequence is SASEEAIQALIALELAPAEAELWVKKAQKTLAEDADSAALIKTAFALRLQGAK.

This sequence belongs to the RuvA family. In terms of assembly, homotetramer. Forms an RuvA(8)-RuvB(12)-Holliday junction (HJ) complex. HJ DNA is sandwiched between 2 RuvA tetramers; dsDNA enters through RuvA and exits via RuvB. An RuvB hexamer assembles on each DNA strand where it exits the tetramer. Each RuvB hexamer is contacted by two RuvA subunits (via domain III) on 2 adjacent RuvB subunits; this complex drives branch migration. In the full resolvosome a probable DNA-RuvA(4)-RuvB(12)-RuvC(2) complex forms which resolves the HJ.

The protein resides in the cytoplasm. Functionally, the RuvA-RuvB-RuvC complex processes Holliday junction (HJ) DNA during genetic recombination and DNA repair, while the RuvA-RuvB complex plays an important role in the rescue of blocked DNA replication forks via replication fork reversal (RFR). RuvA specifically binds to HJ cruciform DNA, conferring on it an open structure. The RuvB hexamer acts as an ATP-dependent pump, pulling dsDNA into and through the RuvAB complex. HJ branch migration allows RuvC to scan DNA until it finds its consensus sequence, where it cleaves and resolves the cruciform DNA. The chain is Holliday junction branch migration complex subunit RuvA from Dichelobacter nodosus (strain VCS1703A).